A 552-amino-acid chain; its full sequence is Phosphoglucomutase (552 aa).

Serine 143 (phosphoserine intermediate) is an active-site residue. The Mg(2+) site is built by serine 143, aspartate 295, aspartate 297, and aspartate 299.

Belongs to the phosphohexose mutase family. Requires Mg(2+) as cofactor.

The enzyme catalyses alpha-D-glucose 1-phosphate = alpha-D-glucose 6-phosphate. It participates in glycolipid metabolism; diglucosyl-diacylglycerol biosynthesis. In terms of biological role, catalyzes the interconversion between glucose-6-phosphate and alpha-glucose-1-phosphate. This is the first step in the biosynthesis of diglucosyl-diacylglycerol (Glc2-DAG), i.e. the predominant glycolipid found in the S.aureus membrane, which is also used as a membrane anchor for lipoteichoic acid (LTA). The chain is Phosphoglucomutase (pgcA) from Staphylococcus aureus (strain Mu50 / ATCC 700699).